The primary structure comprises 449 residues: Elongation factor 1-alpha (449 aa).

The 226-residue stretch at 5-230 folds into the tr-type G domain; that stretch reads KVHINIVVIG…DQINEPKRPS (226 aa). The segment at 14 to 21 is G1; the sequence is GHVDSGKS. 14 to 21 contributes to the GTP binding site; it reads GHVDSGKS. K55 is modified (N6,N6-dimethyllysine). Positions 70–74 are G2; it reads GITID. The residue at position 79 (K79) is an N6,N6,N6-trimethyllysine. Positions 91–94 are G3; that stretch reads DAPG. GTP contacts are provided by residues 91–95 and 153–156; these read DAPGH and NKMD. A G4 region spans residues 153–156; sequence NKMD. An N6,N6,N6-trimethyllysine modification is found at K187. Residues 194-196 form a G5 region; sequence SGF. The residue at position 261 (K261) is an N6-methyllysine. The residue at position 289 (E289) is a 5-glutamyl glycerylphosphorylethanolamine. K306 carries the post-translational modification N6,N6,N6-trimethyllysine. A 5-glutamyl glycerylphosphorylethanolamine modification is found at E362. K396 carries the N6,N6,N6-trimethyllysine modification.

This sequence belongs to the TRAFAC class translation factor GTPase superfamily. Classic translation factor GTPase family. EF-Tu/EF-1A subfamily.

It is found in the cytoplasm. This protein promotes the GTP-dependent binding of aminoacyl-tRNA to the A-site of ribosomes during protein biosynthesis. This Daucus carota (Wild carrot) protein is Elongation factor 1-alpha.